The chain runs to 41 residues: Large ribosomal subunit protein bL36 (41 aa).

This sequence belongs to the bacterial ribosomal protein bL36 family.

The protein is Large ribosomal subunit protein bL36 of Rhodopseudomonas palustris (strain BisB18).